Here is a 534-residue protein sequence, read N- to C-terminus: Nitrate/nitrite transporter NrtP (534 aa).

A run of 12 helical transmembrane segments spans residues 19–39 (WFAFFLSFVVWFNFPPFATTI), 52–72 (TIGLCNVALTVPARIIIGMLL), 79–99 (LTYSLLLIYAAVPCLIFATAQ), 109–129 (LLMGIVGAGFVIGIRMVAEWF), 150–170 (AFSAFTMVIFGIILAFLPGAF), 195–215 (AAIAGTGIIAALYGMLYYFSV), 240–260 (DFWFLLAMNLPLTLILMVLAW), 266–286 (NFLNGTGFAIAILALVGLYLF), 382–404 (WTMVVLTVGMGVGYLLMSSVAGT), 409–431 (IAVLLTMACSFFVQAAEGSTFAI), 445–465 (GNVGAYGNVGAVAYLTVLLLL), and 485–505 (GFFQVLGITGLIVAFLCAFFL).

The protein belongs to the major facilitator superfamily. Nitrate/nitrite porter (TC 2.A.1.8) family.

It localises to the cell inner membrane. Its function is as follows. High-efficiency transport system for both nitrate and nitrite. This is Nitrate/nitrite transporter NrtP from Picosynechococcus sp. (strain ATCC 27264 / PCC 7002 / PR-6) (Agmenellum quadruplicatum).